The primary structure comprises 349 residues: MSVPHIQHRLDPDDPNTSIKAVIKEIKPELDPENLEFFEFTEGISNKLVGCRPTGGSDQEILLFRIYGNKTELFIDRKKEIATYSILNPLGYAPPVYATFENGFCYGFMVGSVMCPKTVCDPHISSLIAKHVADLHAIKLQEENPQPSWYKAILHFFSIIPDKFPDAAKENRFKEVLASKAYLLEEVKLLKSKLDKLESAIVFAHNDLLCKNIIYNKDKDSVCTIDFEYANPNPIAYDIANHFCEYAGVDEVDYSLYPQKDHQVKFLESYLKRAMELQGEKDVNPSSREIEKLYVHVNQFALAAHFFWGVWGLVQAHYSEIDFDFLEYAITRLNEYYLRKEKFLSLTCE.

The protein belongs to the choline/ethanolamine kinase family.

It is found in the cytoplasm. The catalysed reaction is ethanolamine + ATP = phosphoethanolamine + ADP + H(+). It functions in the pathway phospholipid metabolism; phosphatidylethanolamine biosynthesis; phosphatidylethanolamine from ethanolamine: step 1/3. Functionally, highly specific for ethanolamine phosphorylation. May be a rate-controlling step in phosphatidylethanolamine biosynthesis. This chain is Probable ethanolamine kinase (etnk), found in Nematostella vectensis (Starlet sea anemone).